The chain runs to 229 residues: uncharacterized protein (229 aa).

Residues 102-217 form the PilZ domain; it reads RRRTVRVEPD…REKVRRYVFE (116 aa).

This sequence to A.aeolicus aq_820 and aq_1211.

This is an uncharacterized protein from Aquifex aeolicus (strain VF5).